Consider the following 318-residue polypeptide: Ubiquinol oxidase, mitochondrial (318 aa).

A mitochondrion-targeting transit peptide spans 1-46; the sequence is MTVMRGLLNGGRYGNRYIWTAISLRHPEVMEGNGLESAVMQWRRML. Residues 143-163 traverse the membrane as a helical segment; the sequence is AMMLETVAAVPGMVGGMLLHL. Positions 147, 186, and 189 each coordinate Fe cation. A helical transmembrane segment spans residues 205–225; it reads LLVLAVQGVFFNSFFVLYVLS. Glu237, Glu288, and His291 together coordinate Fe cation.

Belongs to the alternative oxidase family. In terms of assembly, homodimer; disulfide-linked. It depends on Fe cation as a cofactor.

The protein localises to the mitochondrion inner membrane. The catalysed reaction is 2 a ubiquinol + O2 = 2 a ubiquinone + 2 H2O. In terms of biological role, catalyzes the cyanide-resistant oxidation of ubiquinol and the reduction of molecular oxygen to water, but does not translocate protons and consequently is not linked to oxidative phosphorylation. May increase respiration when the cytochrome respiratory pathway is restricted, or in response to low temperatures. In Mangifera indica (Mango), this protein is Ubiquinol oxidase, mitochondrial (AOMI 1).